A 144-amino-acid polypeptide reads, in one-letter code: Large ribosomal subunit protein uL13 (144 aa).

Belongs to the universal ribosomal protein uL13 family. As to quaternary structure, part of the 50S ribosomal subunit.

In terms of biological role, this protein is one of the early assembly proteins of the 50S ribosomal subunit, although it is not seen to bind rRNA by itself. It is important during the early stages of 50S assembly. The sequence is that of Large ribosomal subunit protein uL13 from Mycoplasmopsis agalactiae (strain NCTC 10123 / CIP 59.7 / PG2) (Mycoplasma agalactiae).